We begin with the raw amino-acid sequence, 411 residues long: Indian hedgehog protein (411 aa).

An N-terminal signal peptide occupies residues 1–27 (MSPARLRPRLHFCLVLLLLLVVPAAWG). Residue cysteine 28 is the site of N-palmitoyl cysteine attachment. Positions 94, 95, 100, 130, 131, 134, and 136 each coordinate Ca(2+). Zn(2+)-binding residues include histidine 145, aspartate 152, and histidine 187. The Cholesterol glycine ester moiety is linked to residue glycine 202. N-linked (GlcNAc...) asparagine glycosylation is present at asparagine 282.

It belongs to the hedgehog family. Multimer. As to quaternary structure, interacts with BOC and CDON. Interacts with PTCH1. Interacts with glypican GPC3. Post-translationally, cholesterylation is required for N-product targeting to lipid rafts and multimerization. The C-terminal domain displays an autoproteolysis activity and a cholesterol transferase activity. Both activities result in the cleavage of the full-length protein and covalent attachment of a cholesterol moiety to the C-terminal of the newly generated N-product. The N-product is the active species in both local and long-range signaling, whereas the C-product is degraded in the endoplasmic reticulum. In terms of processing, N-palmitoylation by HHAT of N-product is required for indian hedgehog protein N-product multimerization and full activity. In terms of tissue distribution, expressed in embryonic lung, and in adult kidney and liver.

It localises to the cell membrane. Its subcellular location is the endoplasmic reticulum membrane. It is found in the golgi apparatus membrane. The protein resides in the secreted. The catalysed reaction is glycyl-L-cysteinyl-[protein] + cholesterol + H(+) = [protein]-C-terminal glycyl cholesterol ester + N-terminal L-cysteinyl-[protein]. Its function is as follows. Plays a role in embryonic morphogenesis; it is involved in the regulation of endochondral skeleton formation, and the development of retinal pigment epithelium (RPE), photoreceptors and periocular tissues. Functionally, the C-terminal part of the indian hedgehog protein precursor displays an autoproteolysis and a cholesterol transferase activity. Both activities result in the cleavage of the full-length protein into two parts followed by the covalent attachment of a cholesterol moiety to the C-terminal of the newly generated N-product. Both activities occur in the endoplasmic reticulum. Plays a role in hedgehog paracrine signaling. Associated with the very-low-density lipoprotein (VLDL) particles to function as a circulating morphogen for endothelial cell integrity maintenance. In terms of biological role, the dually lipidated indian hedgehog protein N-product is a morphogen which is essential for a variety of patterning events during development. Binds to the patched (PTCH1) receptor, which functions in association with smoothened (SMO), to activate the transcription of target genes. Plays a role in morphogenesis of the skeleton by coordinating growth and differentiation of the endochondral skeleton. Positively regulates PTHLH expression during endochondral bone formation preventing chondrocyte hypertrophy. In contrast, participates in normal chondrocyte proliferation in a PTHLH-independent pathway. The sequence is that of Indian hedgehog protein from Homo sapiens (Human).